The following is a 339-amino-acid chain: D-erythrose-4-phosphate dehydrogenase (339 aa).

Residues 12–13 (RI) and arginine 81 contribute to the NAD(+) site. Substrate-binding positions include 154-156 (SCT), arginine 200, 213-214 (TK), and arginine 236. Cysteine 155 acts as the Nucleophile in catalysis. An NAD(+)-binding site is contributed by asparagine 318.

This sequence belongs to the glyceraldehyde-3-phosphate dehydrogenase family. Epd subfamily. As to quaternary structure, homotetramer.

It is found in the cytoplasm. The enzyme catalyses D-erythrose 4-phosphate + NAD(+) + H2O = 4-phospho-D-erythronate + NADH + 2 H(+). It functions in the pathway cofactor biosynthesis; pyridoxine 5'-phosphate biosynthesis; pyridoxine 5'-phosphate from D-erythrose 4-phosphate: step 1/5. Its function is as follows. Catalyzes the NAD-dependent conversion of D-erythrose 4-phosphate to 4-phosphoerythronate. This is D-erythrose-4-phosphate dehydrogenase from Escherichia coli (strain UTI89 / UPEC).